The primary structure comprises 128 residues: Azurin (128 aa).

A Plastocyanin-like domain is found at 1-128; that stretch reads AECSVDIQGN…ALMKGTLTLK (128 aa). Cysteine 3 and cysteine 26 are joined by a disulfide. The Cu cation site is built by histidine 46, cysteine 112, histidine 117, and methionine 121.

Its subcellular location is the periplasm. Its function is as follows. Transfers electrons from cytochrome c551 to cytochrome oxidase. This chain is Azurin, found in Pseudomonas aeruginosa.